The chain runs to 271 residues: Tryptophan synthase alpha chain (271 aa).

Active-site proton acceptor residues include Glu49 and Asp60.

The protein belongs to the TrpA family. Tetramer of two alpha and two beta chains.

The catalysed reaction is (1S,2R)-1-C-(indol-3-yl)glycerol 3-phosphate + L-serine = D-glyceraldehyde 3-phosphate + L-tryptophan + H2O. It participates in amino-acid biosynthesis; L-tryptophan biosynthesis; L-tryptophan from chorismate: step 5/5. Functionally, the alpha subunit is responsible for the aldol cleavage of indoleglycerol phosphate to indole and glyceraldehyde 3-phosphate. This Rhizorhabdus wittichii (strain DSM 6014 / CCUG 31198 / JCM 15750 / NBRC 105917 / EY 4224 / RW1) (Sphingomonas wittichii) protein is Tryptophan synthase alpha chain.